The chain runs to 628 residues: Probable alpha-L-arabinofuranosidase A (628 aa).

The signal sequence occupies residues 1–25 (MVAFSALSGVSAVSLLLSLVQNAHG). Residues Asn-36, Asn-51, Asn-74, Asn-152, Asn-171, Asn-260, Asn-359, Asn-440, Asn-493, and Asn-610 are each glycosylated (N-linked (GlcNAc...) asparagine).

It belongs to the glycosyl hydrolase 51 family.

It is found in the secreted. It carries out the reaction Hydrolysis of terminal non-reducing alpha-L-arabinofuranoside residues in alpha-L-arabinosides.. It participates in glycan metabolism; L-arabinan degradation. Alpha-L-arabinofuranosidase involved in the degradation of arabinoxylan, a major component of plant hemicellulose. Acts only on small linear 1,5-alpha-linked L-arabinofuranosyl oligosaccharides. The protein is Probable alpha-L-arabinofuranosidase A (abfA) of Aspergillus niger (strain ATCC MYA-4892 / CBS 513.88 / FGSC A1513).